A 203-amino-acid polypeptide reads, in one-letter code: MAQALNSTNIAFFRVAFLFTIAFFCLKNVNSILQNTYFIVLTQAMNLPQLTLSRYSGQLGLFALLFTLNGVHDLIPLLENNVKYFQSVVPVRLLIFFILTSISYLWESNFYVHNNSVFIYCFAEVWINFLLYNAIREEKNEEFKRLNQFMVNDEDIEEPQPFTVKTETTEIIEIINDEENDDEDGKDNDDNNEKGNDDSDAKK.

Residues Met-1 to Gln-3 lie on the Cytoplasmic side of the membrane. Residues Ala-4–Phe-24 traverse the membrane as a helical segment. At Cys-25–Gln-58 the chain is on the lumenal side. A helical transmembrane segment spans residues Leu-59–Glu-79. At Asn-80–Arg-92 the chain is on the cytoplasmic side. The helical transmembrane segment at Leu-93–His-113 threads the bilayer. Asn-114 is a topological domain (lumenal). Residues Asn-115–Ile-135 form a helical membrane-spanning segment. Over Arg-136 to Lys-203 the chain is Cytoplasmic. Positions Ile-175 to Asp-187 are enriched in acidic residues. The interval Ile-175 to Lys-203 is disordered. Over residues Asn-188–Lys-203 the composition is skewed to basic and acidic residues.

Belongs to the ILM1 family.

It is found in the endoplasmic reticulum membrane. In Saccharomyces cerevisiae (strain ATCC 204508 / S288c) (Baker's yeast), this protein is Protein ILM1 (ILM1).